A 59-amino-acid chain; its full sequence is UPF0509 protein KPK_3153 (59 aa).

The protein belongs to the UPF0509 family.

The polypeptide is UPF0509 protein KPK_3153 (Klebsiella pneumoniae (strain 342)).